A 223-amino-acid chain; its full sequence is ATP synthase subunit a 1 (223 aa).

The next 5 helical transmembrane spans lie at 20 to 40 (QTIVMTWVIMVFLAGGSAFLT), 78 to 98 (YLSYLATLFLFVATAVLFTII), 107 to 127 (SLSTTAALALSVFVAVPLYGI), 173 to 193 (VMIIGILLGIAPLFFPVLMSV), and 194 to 214 (LGLLTGMVQAYIFSMLATVYI).

This sequence belongs to the ATPase A chain family. F-type ATPases have 2 components, CF(1) - the catalytic core - and CF(0) - the membrane proton channel. CF(1) has five subunits: alpha(3), beta(3), gamma(1), delta(1), epsilon(1). CF(0) has four main subunits: a, b, b' and c.

The protein localises to the cell inner membrane. Its function is as follows. Key component of the proton channel; it plays a direct role in the translocation of protons across the membrane. The polypeptide is ATP synthase subunit a 1 (Prosthecochloris aestuarii (strain DSM 271 / SK 413)).